The sequence spans 309 residues: Olfactory receptor 5B21 (309 aa).

Topologically, residues 1 to 26 are extracellular; the sequence is MENSTEVTEFILLGLTDDPNLQIPLL. A glycan (N-linked (GlcNAc...) asparagine) is linked at asparagine 3. Residues 27-47 traverse the membrane as a helical segment; sequence LAFLFIYLITLLGNGGMMVII. Over 48–55 the chain is Cytoplasmic; the sequence is HSDSHLHT. A helical transmembrane segment spans residues 56 to 76; the sequence is PMYFFLSNLSLVDLGYSSAVA. Topologically, residues 77–95 are extracellular; it reads PKTVAALRSGDKAISYDGC. Cysteine 95 and cysteine 177 are joined by a disulfide. Residues 96–116 form a helical membrane-spanning segment; the sequence is AAQFFFFVGFATVECYLLASM. Topologically, residues 117–137 are cytoplasmic; the sequence is AYDRHAAVCRPLHYTTTMTAG. The chain crosses the membrane as a helical span at residues 138-158; the sequence is VCALLATGSYVSGFLNASIHA. The Extracellular segment spans residues 159-199; sequence AGTFRLSFCGSNEINHFFCDIPPLLALSCSDTRISKLVVFV. A helical membrane pass occupies residues 200–220; the sequence is AGFNVFFTLLVILISYFFICI. Over 221–235 the chain is Cytoplasmic; the sequence is TIQRMHSAEGQKKVF. Residues 236-256 form a helical membrane-spanning segment; the sequence is STCASHLTALSIFYGTIIFMY. Residues 257–270 lie on the Extracellular side of the membrane; it reads LQPNSSQSVDTDKI. Asparagine 260 is a glycosylation site (N-linked (GlcNAc...) asparagine). Residues 271–291 traverse the membrane as a helical segment; that stretch reads ASVFYTVVIPMLNPLIYSLRN. Residues 292 to 309 are Cytoplasmic-facing; the sequence is KEVKSALWKILNKLYPQY.

The protein belongs to the G-protein coupled receptor 1 family.

It is found in the cell membrane. Functionally, odorant receptor. This is Olfactory receptor 5B21 from Homo sapiens (Human).